The following is a 273-amino-acid chain: Shikimate dehydrogenase (NADP(+)) (273 aa).

Shikimate is bound by residues 19 to 21 (SQS) and Thr-66. Lys-70 (proton acceptor) is an active-site residue. Glu-82 contacts NADP(+). The shikimate site is built by Asn-91 and Asp-107. NADP(+) is bound by residues 131–135 (GAGGA) and Met-217. Tyr-219 contributes to the shikimate binding site. Gly-241 provides a ligand contact to NADP(+).

Belongs to the shikimate dehydrogenase family. Homodimer.

It catalyses the reaction shikimate + NADP(+) = 3-dehydroshikimate + NADPH + H(+). It participates in metabolic intermediate biosynthesis; chorismate biosynthesis; chorismate from D-erythrose 4-phosphate and phosphoenolpyruvate: step 4/7. Functionally, involved in the biosynthesis of the chorismate, which leads to the biosynthesis of aromatic amino acids. Catalyzes the reversible NADPH linked reduction of 3-dehydroshikimate (DHSA) to yield shikimate (SA). The chain is Shikimate dehydrogenase (NADP(+)) from Buchnera aphidicola subsp. Schizaphis graminum (strain Sg).